The sequence spans 180 residues: ADP-ribosylation factor 5 (180 aa).

The N-myristoyl glycine moiety is linked to residue glycine 2. Residues glycine 24–threonine 31, aspartate 67–glutamine 71, and asparagine 126–aspartate 129 each bind GTP.

It belongs to the small GTPase superfamily. Arf family.

It is found in the golgi apparatus. In terms of biological role, GTP-binding protein involved in protein trafficking; may modulate vesicle budding and uncoating within the Golgi apparatus. This Gallus gallus (Chicken) protein is ADP-ribosylation factor 5 (ARF5).